Consider the following 84-residue polypeptide: U21-theraphotoxin-Cg1a 3 (84 aa).

The first 21 residues, methionine 1 to alanine 21, serve as a signal peptide directing secretion. A propeptide spanning residues glutamate 22–arginine 47 is cleaved from the precursor. 3 disulfide bridges follow: cysteine 49/cysteine 63, cysteine 56/cysteine 68, and cysteine 62/cysteine 76. Valine 82 carries the post-translational modification Valine amide.

Belongs to the neurotoxin 10 (Hwtx-1) family. 05 (F4a) subfamily. As to expression, expressed by the venom gland.

It is found in the secreted. Functionally, probable ion channel inhibitor. The protein is U21-theraphotoxin-Cg1a 3 of Chilobrachys guangxiensis (Chinese earth tiger tarantula).